Consider the following 588-residue polypeptide: Protein kinase C iota type (588 aa).

The PB1 domain maps to 18–101; the sequence is QVRVKAYYRG…SELIIHVFPC (84 aa). The Phorbol-ester/DAG-type zinc-finger motif lies at 133-183; the sequence is GHAFQAKRFNRRAHCAICTDRIWGLGRQGYKCINCKLLVHKKCHKLVTVEC. The interval 194-213 is disordered; the sequence is GRIDPGSTHPEHPDQVLGKK. One can recognise a Protein kinase domain in the interval 246–514; that stretch reads FDLLRVIGRG…FADIMAHPFF (269 aa). ATP-binding positions include 252–260 and Lys275; that span reads IGRGSYAKV. The Proton acceptor role is filled by Asp370. A phosphothreonine mark is found at Thr404 and Thr556. The AGC-kinase C-terminal domain maps to 515–586; sequence RNVDWDLMEQ…INPLLMSAEE (72 aa).

This sequence belongs to the protein kinase superfamily. AGC Ser/Thr protein kinase family. PKC subfamily.

It catalyses the reaction L-seryl-[protein] + ATP = O-phospho-L-seryl-[protein] + ADP + H(+). The enzyme catalyses L-threonyl-[protein] + ATP = O-phospho-L-threonyl-[protein] + ADP + H(+). Exhibits an elevated basal enzymatic activity and is not regulated by diacylglycerol, phosphatidylserine, phorbol esters or calcium ions. Two specific sites, Thr-404 (activation loop of the kinase domain) and Thr-556 (turn motif), need to be phosphorylated for its full activation. In terms of biological role, calcium- and diacylglycerol-independent serine/ threonine-protein kinase that plays a general protective role against apoptotic stimuli, is involved in NF-kappa-B activation, cell survival, differentiation and polarity, and contributes to the regulation of microtubule dynamics in the early secretory pathway. Is required for the formation and maintenance of the zonula adherens during early epithelial development and plays a critical role in organ morphogenesis and in regulating the orientation of cell division. Required for polarized epithelial organization, myocardium coherence and cell connectivity in the early somite stages. Required for heart cone tilt and development of circulatory architecture during embryogenesis. The protein is Protein kinase C iota type (prkci) of Danio rerio (Zebrafish).